Reading from the N-terminus, the 209-residue chain is V-type ATP synthase subunit D (209 aa).

It belongs to the V-ATPase D subunit family.

Functionally, produces ATP from ADP in the presence of a proton gradient across the membrane. In Thermoanaerobacter pseudethanolicus (strain ATCC 33223 / 39E) (Clostridium thermohydrosulfuricum), this protein is V-type ATP synthase subunit D.